We begin with the raw amino-acid sequence, 788 residues long: Multi-functional prenyltransferase ltmE (788 aa).

Substrate contacts are provided by lysine 18 and histidine 51. Residue aspartate 58 coordinates Mg(2+). Positions 67, 151, 152, 182, 189, and 199 each coordinate substrate. Residues aspartate 283–serine 337 are disordered. The span at histidine 299–serine 314 shows a compositional bias: basic and acidic residues. Residues alanine 316–serine 337 are compositionally biased toward polar residues. Methionine 404–alanine 405 contributes to the L-tryptophan binding site. Substrate contacts are provided by arginine 427, arginine 599, lysine 601, tyrosine 603, and tyrosine 687.

This sequence in the N-terminal section; belongs to the FPP/GGPP synthase family. It in the C-terminal section; belongs to the tryptophan dimethylallyltransferase family. The cofactor is Mg(2+).

Its pathway is secondary metabolite biosynthesis. Its function is as follows. Multi-functional prenyltransferase; part of the gene cluster that mediates the biosynthesis of lolitrems, indole-diterpene mycotoxins that are potent tremorgens in mammals, and are synthesized by clavicipitaceous fungal endophytes in association with their grass hosts. The geranylgeranyl diphosphate (GGPP) synthase ltmG is proposed to catalyze the first step in lolitrem biosynthesis. LtmG catalyzes a series of iterative condensations of isopentenyl diphosphate (IPP) with dimethylallyl diphosphate (DMAPP), geranyl diphosphate (GPP), and farnesyl diphosphate (FPP), to form GGPP. GGPP then condenses with indole-3-glycerol phosphate to form 3-geranylgeranylindole, an acyclic intermediate, to be incorporated into paxilline. Either ltmG or ltmC could be responsible for this step, as both are putative prenyl transferases. The FAD-dependent monooxygenase ltmM then catalyzes the epoxidation of the two terminal alkenes of the geranylgeranyl moiety, which is subsequently cyclized by ltmB, to paspaline. The cytochrome P450 monooxygenases ltmQ and ltmP can sequentially oxidize paspaline to terpendole E and terpendole F. Alternatively, ltmP converts paspaline to an intermediate which is oxidized by ltmQ to terpendole F. LtmF, ltmK, ltmE and ltmJ appear to be unique to the epichloe endophytes. The prenyltransferase ltmF is involved in the 27-hydroxyl-O-prenylation. The cytochrome P450 monooxygenase ltmK is required for the oxidative acetal ring formation. The multi-functional prenyltransferase ltmE is required for C20- and C21-prenylations of the indole ring of paspalanes and acts together with the cytochrome P450 monooxygenase ltmJ to yield lolitremanes by multiple oxidations and ring closures. The stereoisomer pairs of lolitriol and lolitrem N or lolitrem B and lolitrem F may be attributed to variations in the way in which ring closure can occur under the action of ltmJ. While the major product of this pathway is lolitrem B, the prenyl transferases and cytochrome P450 monooxygenases identified in this pathway have a remarkable versatility in their regio- and stereo-specificities to generate a diverse range of metabolites that are products of a metabolic grid rather than a linear pathway. The protein is Multi-functional prenyltransferase ltmE of Epichloe festucae var. lolii (Neotyphodium lolii).